The sequence spans 442 residues: Meiosis-specific with OB domain-containing protein (442 aa).

Positions 167–272 (IINVLAAVKS…EANILLNFIR (106 aa)) form a DNA-binding region, OB.

The protein belongs to the MEIOB family. As to quaternary structure, component of a multiprotein complex with RPA2 and SPATA22. Interacts with SPATA22. Interacts with the complex BRME1:HSF2BP:BRCA2. As to expression, in fetal gonads, specifically expressed in the ovary starting at the 14th weeks post fertilization. In the adult, restricted to testis.

Its subcellular location is the cytoplasm. It localises to the nucleus. It is found in the chromosome. Its function is as follows. Single-stranded DNA-binding protein required for homologous recombination in meiosis I. Required for double strand breaks (DSBs) repair and crossover formation and promotion of faithful and complete synapsis. Not required for the initial loading of recombinases but required to maintain a proper number of RAD51 and DMC1 foci after the zygotene stage. May act by ensuring the stabilization of recombinases, which is required for successful homology search and meiotic recombination. Displays Single-stranded DNA 3'-5' exonuclease activity in vitro. This chain is Meiosis-specific with OB domain-containing protein, found in Homo sapiens (Human).